A 137-amino-acid chain; its full sequence is MLVPKRVKHRREFRGKMRGEAKGGKEVAFGEYGLQATTSHWITNRQIEAARIAMTRYMKRGGKVWIKIFPHKSYTAKAIGVRMGSGKGAPEGWVAPVKRGKIMFEIADVPEEVAREALRLASHKLPVKTKFVKREAE.

It belongs to the universal ribosomal protein uL16 family. As to quaternary structure, part of the 50S ribosomal subunit.

Its function is as follows. Binds 23S rRNA and is also seen to make contacts with the A and possibly P site tRNAs. The protein is Large ribosomal subunit protein uL16 of Streptococcus mutans serotype c (strain ATCC 700610 / UA159).